The primary structure comprises 618 residues: 1-deoxy-D-xylulose-5-phosphate synthase (618 aa).

Thiamine diphosphate is bound by residues H70 and 111-113; that span reads GHS. D142 is a Mg(2+) binding site. Residues 143-144, N171, Y278, and E360 each bind thiamine diphosphate; that span reads GS. Residue N171 coordinates Mg(2+).

The protein belongs to the transketolase family. DXPS subfamily. In terms of assembly, homodimer. Mg(2+) is required as a cofactor. The cofactor is thiamine diphosphate.

The enzyme catalyses D-glyceraldehyde 3-phosphate + pyruvate + H(+) = 1-deoxy-D-xylulose 5-phosphate + CO2. Its pathway is metabolic intermediate biosynthesis; 1-deoxy-D-xylulose 5-phosphate biosynthesis; 1-deoxy-D-xylulose 5-phosphate from D-glyceraldehyde 3-phosphate and pyruvate: step 1/1. Its function is as follows. Catalyzes the acyloin condensation reaction between C atoms 2 and 3 of pyruvate and glyceraldehyde 3-phosphate to yield 1-deoxy-D-xylulose-5-phosphate (DXP). The polypeptide is 1-deoxy-D-xylulose-5-phosphate synthase (Helicobacter pylori (strain HPAG1)).